The primary structure comprises 118 residues: Diacylglycerol kinase (118 aa).

E28 contributes to the a divalent metal cation binding site. A run of 2 helical transmembrane segments spans residues 29–49 and 55–75; these read TAFR…FFLG and IILM…NSAV. The Proton acceptor role is filled by E69. E76 lines the a divalent metal cation pocket. A helical membrane pass occupies residues 98–118; it reads SASVFIALCIVGIVWGGILFF.

Belongs to the bacterial diacylglycerol kinase family. Requires Mg(2+) as cofactor.

It localises to the cell inner membrane. It catalyses the reaction a 1,2-diacyl-sn-glycerol + ATP = a 1,2-diacyl-sn-glycero-3-phosphate + ADP + H(+). Its function is as follows. Catalyzes the ATP-dependent phosphorylation of sn-l,2-diacylglycerol (DAG) to phosphatidic acid. Involved in the recycling of diacylglycerol produced as a by-product during membrane-derived oligosaccharide (MDO) biosynthesis. This chain is Diacylglycerol kinase (dgkA), found in Haemophilus influenzae (strain ATCC 51907 / DSM 11121 / KW20 / Rd).